Reading from the N-terminus, the 586-residue chain is Arginine--tRNA ligase (586 aa).

The 'HIGH' region signature appears at 133 to 143; the sequence is ANPTGPLNIVS.

It belongs to the class-I aminoacyl-tRNA synthetase family. In terms of assembly, monomer.

It is found in the cytoplasm. It catalyses the reaction tRNA(Arg) + L-arginine + ATP = L-arginyl-tRNA(Arg) + AMP + diphosphate. This is Arginine--tRNA ligase from Leptospira borgpetersenii serovar Hardjo-bovis (strain JB197).